Here is a 234-residue protein sequence, read N- to C-terminus: MSILHATILTVFPEMFPGTLGHSLAGQALNKNIWSYDVINIRDFGLTKHKNIDDEAYGGGNGLIMRPDVLGSSIDHALALNPNAEMYYPSPRGRVFTQSFAKEMLKNKNLIFLCGRYEGIDERVIEEYNVKEISVGDYILSGGEMPTLTILDCLIRLLPGVLMNQNTLSSESFEEDGEFKGGLECSLYTRPEIWRDRAVPSVLLSGNHRLINEWKKEQSHMITKLRRPELLKDL.

Residues glycine 115 and 135 to 140 (VGDYIL) each bind S-adenosyl-L-methionine.

It belongs to the RNA methyltransferase TrmD family. In terms of assembly, homodimer.

It is found in the cytoplasm. The catalysed reaction is guanosine(37) in tRNA + S-adenosyl-L-methionine = N(1)-methylguanosine(37) in tRNA + S-adenosyl-L-homocysteine + H(+). In terms of biological role, specifically methylates guanosine-37 in various tRNAs. This Rickettsia peacockii (strain Rustic) protein is tRNA (guanine-N(1)-)-methyltransferase.